Reading from the N-terminus, the 578-residue chain is Thrombomodulin (578 aa).

The N-terminal stretch at 1-16 is a signal peptide; sequence MLRVLLLGVLAPAGLG. The Extracellular portion of the chain corresponds to 17 to 518; sequence LPTPAQPQPR…SPSPVGPVHS (502 aa). One can recognise a C-type lectin domain in the interval 31–167; that stretch reads MEHDCFQLFR…CAAEADGFLC (137 aa). Asparagine 114 carries N-linked (GlcNAc...) asparagine glycosylation. Intrachain disulfides connect cysteine 137/cysteine 158, cysteine 246/cysteine 257, cysteine 253/cysteine 266, cysteine 268/cysteine 281, cysteine 289/cysteine 297, cysteine 293/cysteine 309, cysteine 311/cysteine 324, cysteine 330/cysteine 341, cysteine 337/cysteine 350, cysteine 352/cysteine 363, cysteine 370/cysteine 379, cysteine 375/cysteine 389, cysteine 391/cysteine 405, cysteine 409/cysteine 414, cysteine 418/cysteine 426, cysteine 428/cysteine 440, cysteine 446/cysteine 455, cysteine 451/cysteine 464, and cysteine 466/cysteine 480. EGF-like domains follow at residues 242-282 and 285-325; these read GAWD…RSCA and AEHS…HRCE. Asparagine 300 carries N-linked (GlcNAc...) asparagine glycosylation. An EGF-like 3; calcium-binding domain is found at 326 to 364; the sequence is DVDDCIQVPSLCPQLCVNTRGAFECHCYPGYELVDNECV. A (3R)-3-hydroxyasparagine modification is found at asparagine 343. EGF-like domains follow at residues 366–406 and 405–441; these read PVDP…HRCQ and CQMF…FMCT. Residue asparagine 410 is glycosylated (N-linked (GlcNAc...) asparagine). The EGF-like 6; calcium-binding domain occupies 442–481; sequence DIDECENGECPEACRNLPGTYECICGPDSPLAGQVATDCG. Residues 483–512 are disordered; the sequence is IISDPDGDSDSGSGEPPVTPTPGVTPSPSP. O-linked (Xyl...) (chondroitin sulfate) serine glycosylation is found at serine 493 and serine 495. The segment covering 499 to 512 has biased composition (pro residues); sequence PVTPTPGVTPSPSP. Residues 519-539 form a helical membrane-spanning segment; sequence GVLIGISIASLSLVVALLALL. At 540-578 the chain is on the cytoplasmic side; that stretch reads CHLRKKQGAPRAELEYKCGAPAKEVVLQHVRTEQMPQKL.

As to quaternary structure, interacts with ITGAL, ITGAM and ITGB2. Interacts with thrombin/F2; this interaction switches the specificity of thrombin from a procoagulant to an anticoagulant and antifibrinolytic protease. Interacts with ANGP1 and ANGP2; these interactions significantly inhibit the generation of activated PC and TAFIa/CPB2 by the thrombin/thrombomodulin complex. Interacts with PF4; this interaction enhances generation of activated protein C. Interacts with HMGB1; this interaction inhibits HMGB1 inflammatory activity. N-glycosylated. Post-translationally, the iron and 2-oxoglutarate dependent 3-hydroxylation of aspartate and asparagine is (R) stereospecific within EGF domains. In terms of tissue distribution, expressed in lung, liver, spleen, kidney, pancreas and lymph node. Low expression in heart, cerebrum, urinary bladder and uterus.

The protein localises to the membrane. Endothelial cell receptor that plays a critical role in regulating several physiological processes including hemostasis, coagulation, fibrinolysis, inflammation, and angiogenesis. Acts as a cofactor for thrombin activation of protein C/PROC on the surface of vascular endothelial cells leading to initiation of the activated protein C anticoagulant pathway. Also accelerates the activation of the plasma carboxypeptidase B2/CPB2, which catalyzes removal of C-terminal basic amino acids from its substrates including kinins or anaphylatoxins leading to fibrinolysis inhibition. Plays critical protective roles in changing the cleavage specificity of protease-activated receptor 1/PAR1, inhibiting endothelial cell permeability and inflammation. Suppresses inflammation distinctly from its anticoagulant cofactor activity by sequestering HMGB1 thereby preventing it from engaging cellular receptors such as RAGE and contributing to the inflammatory response. The protein is Thrombomodulin (THBD) of Canis lupus familiaris (Dog).